A 381-amino-acid chain; its full sequence is 4-hydroxy-3-methylbut-2-en-1-yl diphosphate synthase (flavodoxin) (381 aa).

[4Fe-4S] cluster contacts are provided by Cys280, Cys283, Cys315, and Glu322.

The protein belongs to the IspG family. [4Fe-4S] cluster is required as a cofactor.

The catalysed reaction is (2E)-4-hydroxy-3-methylbut-2-enyl diphosphate + oxidized [flavodoxin] + H2O + 2 H(+) = 2-C-methyl-D-erythritol 2,4-cyclic diphosphate + reduced [flavodoxin]. It functions in the pathway isoprenoid biosynthesis; isopentenyl diphosphate biosynthesis via DXP pathway; isopentenyl diphosphate from 1-deoxy-D-xylulose 5-phosphate: step 5/6. Functionally, converts 2C-methyl-D-erythritol 2,4-cyclodiphosphate (ME-2,4cPP) into 1-hydroxy-2-methyl-2-(E)-butenyl 4-diphosphate. The sequence is that of 4-hydroxy-3-methylbut-2-en-1-yl diphosphate synthase (flavodoxin) from Clavibacter sepedonicus (Clavibacter michiganensis subsp. sepedonicus).